The chain runs to 493 residues: Proline--tRNA ligase (493 aa).

Belongs to the class-II aminoacyl-tRNA synthetase family. ProS type 3 subfamily. As to quaternary structure, homodimer.

The protein localises to the cytoplasm. It catalyses the reaction tRNA(Pro) + L-proline + ATP = L-prolyl-tRNA(Pro) + AMP + diphosphate. Functionally, catalyzes the attachment of proline to tRNA(Pro) in a two-step reaction: proline is first activated by ATP to form Pro-AMP and then transferred to the acceptor end of tRNA(Pro). In Azobacteroides pseudotrichonymphae genomovar. CFP2, this protein is Proline--tRNA ligase.